The primary structure comprises 108 residues: UPF0145 protein SYNPCC7002_A1337 (108 aa).

It belongs to the UPF0145 family.

This chain is UPF0145 protein SYNPCC7002_A1337, found in Picosynechococcus sp. (strain ATCC 27264 / PCC 7002 / PR-6) (Agmenellum quadruplicatum).